Here is a 236-residue protein sequence, read N- to C-terminus: Purine nucleoside phosphorylase DeoD-type 2 (236 aa).

His5 serves as a coordination point for a purine D-ribonucleoside. Phosphate-binding positions include Gly21, Arg25, Arg44, and 88–91 (RVGS). Residues 180-182 (DME) and 204-205 (SD) each bind a purine D-ribonucleoside. Asp205 functions as the Proton donor in the catalytic mechanism.

This sequence belongs to the PNP/UDP phosphorylase family. In terms of assembly, homohexamer; trimer of homodimers.

It carries out the reaction a purine D-ribonucleoside + phosphate = a purine nucleobase + alpha-D-ribose 1-phosphate. The enzyme catalyses a purine 2'-deoxy-D-ribonucleoside + phosphate = a purine nucleobase + 2-deoxy-alpha-D-ribose 1-phosphate. In terms of biological role, catalyzes the reversible phosphorolytic breakdown of the N-glycosidic bond in the beta-(deoxy)ribonucleoside molecules, with the formation of the corresponding free purine bases and pentose-1-phosphate. In Photobacterium profundum (strain SS9), this protein is Purine nucleoside phosphorylase DeoD-type 2.